We begin with the raw amino-acid sequence, 203 residues long: METLSQDSLLECQICFNYYSPRRRPKLLDCKHTCCSVCLQQMRTSQKDVRCPWCRGITKLPPGFSVSQLPDDPEVLAVIAIPHTSEHTPVFIKLPSNGCYMLPLPISKERTLLPGDMGCRLLPGSQQKSLTVVTIPAEQQPLQGGAPPEAVEEEPDRRGVVKSSTWSGVCTVILVACVLVFLLGIVLHNMSCISKRFTVISCG.

An RING-type zinc finger spans residues 12–55; that stretch reads CQICFNYYSPRRRPKLLDCKHTCCSVCLQQMRTSQKDVRCPWCR. Positions 106-165 are necessary for interaction with RRAGA; that stretch reads ISKERTLLPGDMGCRLLPGSQQKSLTVVTIPAEQQPLQGGAPPEAVEEEPDRRGVVKSST. The tract at residues 139 to 158 is disordered; sequence QQPLQGGAPPEAVEEEPDRR. A helical membrane pass occupies residues 167 to 187; that stretch reads SGVCTVILVACVLVFLLGIVL.

It belongs to the RNF152 family. As to quaternary structure, interacts with RRAGA (inactive GDP-bound form); stimulated by amino acid starvation. Interacts with SEC16A. Ubiquitinated. Autoubiquitinated in vitro, leading to its degradation by the proteasome.

The protein resides in the lysosome membrane. It catalyses the reaction S-ubiquitinyl-[E2 ubiquitin-conjugating enzyme]-L-cysteine + [acceptor protein]-L-lysine = [E2 ubiquitin-conjugating enzyme]-L-cysteine + N(6)-ubiquitinyl-[acceptor protein]-L-lysine.. The protein operates within protein modification; protein ubiquitination. E3 ubiquitin-protein ligase that acts as a negative regulator of mTORC1 signaling by mediating ubiquitination of RagA/RRAGA and RHEB. Catalyzes 'Lys-63'-linked polyubiquitination of RagA/RRAGA in response to amino acid starvation, thereby regulating mTORC1 signaling. Also mediates monoubiquitination of RHEB, promoting its association with the TSC-TBC complex and subsequent inhibition. Also mediates 'Lys-48'-linked polyubiquitination of target proteins and their subsequent targeting to the proteasome for degradation. Induces apoptosis when overexpressed. In Mus musculus (Mouse), this protein is E3 ubiquitin-protein ligase RNF152.